The chain runs to 150 residues: Endoribonuclease YbeY (150 aa).

Residues His112, His116, and His122 each coordinate Zn(2+).

It belongs to the endoribonuclease YbeY family. Zn(2+) is required as a cofactor.

It localises to the cytoplasm. Functionally, single strand-specific metallo-endoribonuclease involved in late-stage 70S ribosome quality control and in maturation of the 3' terminus of the 16S rRNA. The chain is Endoribonuclease YbeY from Bdellovibrio bacteriovorus (strain ATCC 15356 / DSM 50701 / NCIMB 9529 / HD100).